The primary structure comprises 609 residues: Putative 4-coumarate--CoA ligase-like 8 (609 aa).

Residues S194, S195, G196, T197, T198, and K202 each coordinate ATP. Positions 252 and 256 each coordinate (E)-4-coumaroyl-AMP. A CoA-binding site is contributed by R274. The SBD1 stretch occupies residues 276-348 (SVEKTMAAVE…SCFPAVNLGQ (73 aa)). (E)-4-coumaroyl-AMP is bound by residues G326, Q348, T353, and M361. Residues Q348 and T353 each contribute to the ATP site. Residues 349-450 (CYGLTETTGI…VRGPSTMRGY (102 aa)) are SBD2. ATP-binding residues include D482 and R497. Positions 499 and 503 each coordinate (E)-4-coumaroyl-AMP. Position 506 (A506) interacts with CoA. An ATP-binding site is contributed by K589.

It belongs to the ATP-dependent AMP-binding enzyme family. Mg(2+) serves as cofactor.

It carries out the reaction (E)-4-coumarate + ATP + CoA = (E)-4-coumaroyl-CoA + AMP + diphosphate. The enzyme catalyses (E)-4-coumarate + ATP + H(+) = (E)-4-coumaroyl-AMP + diphosphate. The catalysed reaction is (E)-4-coumaroyl-AMP + CoA = (E)-4-coumaroyl-CoA + AMP + H(+). Carboxylate--CoA ligase that may use 4-coumarate as substrate. Follows a two-step reaction mechanism, wherein the carboxylate substrate first undergoes adenylation by ATP, followed by a thioesterification in the presence of CoA to yield the final CoA thioester. The protein is Putative 4-coumarate--CoA ligase-like 8 (4CLL8) of Oryza sativa subsp. japonica (Rice).